The primary structure comprises 267 residues: MRLIIRTNYNDISKWAANHVAMRIKEFSPTKEKPFILGLPTGSSPIGMYKNLIEMNKIGKISFENVVTFNMDEYVGLDKNHPESYNSFMWNNFFSHIDIKKENVHMLNGNAINLTNECTEYENKIKSYGGIMLFVGGIGPDGHIAFNEPGSSLKSRTRLKTLTQDTIIANSRFFENDINKVPKSALTVGVGTIMDSKEVMIIVNGHNKARALRHAIEKGVNHMWTISTLQLHKNAIIVSDEAATYELKVGTVKYFNDIEKDNFNNDI.

The active-site Proton acceptor; for enolization step is Asp-72. The For ring-opening step role is filled by Asp-141. His-143 acts as the Proton acceptor; for ring-opening step in catalysis. The active-site For ring-opening step is the Glu-148.

It belongs to the glucosamine/galactosamine-6-phosphate isomerase family. NagB subfamily.

The catalysed reaction is alpha-D-glucosamine 6-phosphate + H2O = beta-D-fructose 6-phosphate + NH4(+). It functions in the pathway amino-sugar metabolism; N-acetylneuraminate degradation; D-fructose 6-phosphate from N-acetylneuraminate: step 5/5. With respect to regulation, allosterically activated by N-acetylglucosamine 6-phosphate (GlcNAc6P). In terms of biological role, catalyzes the reversible isomerization-deamination of glucosamine 6-phosphate (GlcN6P) to form fructose 6-phosphate (Fru6P) and ammonium ion. The chain is Glucosamine-6-phosphate deaminase from Borrelia hermsii (strain HS1 / DAH).